Here is a 249-residue protein sequence, read N- to C-terminus: Salivary antigen-5 (249 aa).

An N-terminal signal peptide occupies residues 1–26 (MAKTQCPLVFSLLALALIGTLQSSAA). In terms of domain architecture, SCP spans 50–193 (SIHNYYRNLT…WYAGYLVCNY (144 aa)). Asparagine 57, asparagine 127, and asparagine 168 each carry an N-linked (GlcNAc...) asparagine glycan.

The protein belongs to the CRISP family. Venom allergen 5-like subfamily. As to quaternary structure, monomeric in solution. Cu(2+) serves as cofactor. As to expression, saliva (at protein level). Salivary gland (at protein level).

It localises to the secreted. Functionally, antioxidant protein that scavenges superoxide radicals. Removes superoxide radicals produced by PMA-stimulated host neutrophils. Inhibits host platelet aggregation induced by low doses of collagen by interfering with the pro-aggregatory properties of reactive oxygen species on platelets. Binds to heparin and sulfated glycosaminoglycans. The protein is Salivary antigen-5 of Dipetalogaster maximus (Blood-sucking bug).